Reading from the N-terminus, the 379-residue chain is Lipoyl synthase, mitochondrial (379 aa).

[4Fe-4S] cluster-binding residues include cysteine 106, cysteine 111, cysteine 117, cysteine 137, cysteine 141, cysteine 144, and serine 352. The Radical SAM core domain maps to 122-341; the sequence is EHGTQTATIM…EERGNALGFL (220 aa).

Belongs to the radical SAM superfamily. Lipoyl synthase family. [4Fe-4S] cluster serves as cofactor.

It localises to the mitochondrion. It carries out the reaction [[Fe-S] cluster scaffold protein carrying a second [4Fe-4S](2+) cluster] + N(6)-octanoyl-L-lysyl-[protein] + 2 oxidized [2Fe-2S]-[ferredoxin] + 2 S-adenosyl-L-methionine + 4 H(+) = [[Fe-S] cluster scaffold protein] + N(6)-[(R)-dihydrolipoyl]-L-lysyl-[protein] + 4 Fe(3+) + 2 hydrogen sulfide + 2 5'-deoxyadenosine + 2 L-methionine + 2 reduced [2Fe-2S]-[ferredoxin]. The protein operates within protein modification; protein lipoylation via endogenous pathway; protein N(6)-(lipoyl)lysine from octanoyl-[acyl-carrier-protein]: step 2/2. In terms of biological role, catalyzes the radical-mediated insertion of two sulfur atoms into the C-6 and C-8 positions of the octanoyl moiety bound to the lipoyl domains of lipoate-dependent enzymes, thereby converting the octanoylated domains into lipoylated derivatives. The polypeptide is Lipoyl synthase, mitochondrial (Drosophila erecta (Fruit fly)).